A 101-amino-acid polypeptide reads, in one-letter code: Small ribosomal subunit protein uS14 (101 aa).

This sequence belongs to the universal ribosomal protein uS14 family. As to quaternary structure, part of the 30S ribosomal subunit. Contacts proteins S3 and S10.

Its function is as follows. Binds 16S rRNA, required for the assembly of 30S particles and may also be responsible for determining the conformation of the 16S rRNA at the A site. The polypeptide is Small ribosomal subunit protein uS14 (Histophilus somni (strain 2336) (Haemophilus somnus)).